We begin with the raw amino-acid sequence, 330 residues long: Inositol 2-dehydrogenase (330 aa).

It belongs to the Gfo/Idh/MocA family.

The enzyme catalyses myo-inositol + NAD(+) = scyllo-inosose + NADH + H(+). The protein operates within polyol metabolism; myo-inositol degradation into acetyl-CoA; acetyl-CoA from myo-inositol: step 1/7. Its function is as follows. Involved in the oxidation of myo-inositol (MI) to 2-keto-myo-inositol (2KMI or 2-inosose). The protein is Inositol 2-dehydrogenase (idhA) of Rhizobium meliloti (strain 1021) (Ensifer meliloti).